Reading from the N-terminus, the 452-residue chain is Bifunctional protein GlmU (452 aa).

The tract at residues Met-1–Lys-232 is pyrophosphorylase. Residues Leu-11 to Gly-14, Lys-25, Gln-78, and Gly-83 to Thr-84 each bind UDP-N-acetyl-alpha-D-glucosamine. Asp-108 contributes to the Mg(2+) binding site. The UDP-N-acetyl-alpha-D-glucosamine site is built by Gly-144, Glu-158, Asn-173, and Asn-230. Residue Asn-230 coordinates Mg(2+). A linker region spans residues Ala-233 to Ala-253. The tract at residues Gly-254–His-452 is N-acetyltransferase. Arg-319 and Lys-337 together coordinate UDP-N-acetyl-alpha-D-glucosamine. His-349 (proton acceptor) is an active-site residue. 2 residues coordinate UDP-N-acetyl-alpha-D-glucosamine: Tyr-352 and Asn-363. Residues Ala-366, Asn-372–Tyr-373, Ser-391, Ser-409, and Arg-426 contribute to the acetyl-CoA site.

In the N-terminal section; belongs to the N-acetylglucosamine-1-phosphate uridyltransferase family. This sequence in the C-terminal section; belongs to the transferase hexapeptide repeat family. Homotrimer. Mg(2+) serves as cofactor.

The protein localises to the cytoplasm. It carries out the reaction alpha-D-glucosamine 1-phosphate + acetyl-CoA = N-acetyl-alpha-D-glucosamine 1-phosphate + CoA + H(+). The catalysed reaction is N-acetyl-alpha-D-glucosamine 1-phosphate + UTP + H(+) = UDP-N-acetyl-alpha-D-glucosamine + diphosphate. It functions in the pathway nucleotide-sugar biosynthesis; UDP-N-acetyl-alpha-D-glucosamine biosynthesis; N-acetyl-alpha-D-glucosamine 1-phosphate from alpha-D-glucosamine 6-phosphate (route II): step 2/2. The protein operates within nucleotide-sugar biosynthesis; UDP-N-acetyl-alpha-D-glucosamine biosynthesis; UDP-N-acetyl-alpha-D-glucosamine from N-acetyl-alpha-D-glucosamine 1-phosphate: step 1/1. Its pathway is bacterial outer membrane biogenesis; LPS lipid A biosynthesis. Functionally, catalyzes the last two sequential reactions in the de novo biosynthetic pathway for UDP-N-acetylglucosamine (UDP-GlcNAc). The C-terminal domain catalyzes the transfer of acetyl group from acetyl coenzyme A to glucosamine-1-phosphate (GlcN-1-P) to produce N-acetylglucosamine-1-phosphate (GlcNAc-1-P), which is converted into UDP-GlcNAc by the transfer of uridine 5-monophosphate (from uridine 5-triphosphate), a reaction catalyzed by the N-terminal domain. This chain is Bifunctional protein GlmU, found in Rhodopseudomonas palustris (strain ATCC BAA-98 / CGA009).